A 170-amino-acid chain; its full sequence is MERRYVPVADVARPHGVQGELRLRLYNEASDLLLTRPPIRLRLPDGSARDAKIVATRPVDKALLVRIAGIDDRDAAEALRGATVCVPRDAFAPLSEGEFYACDVEGARVMTPDGDLLGHVRSLQSYPTCDVLVVERQGADSIEVPLTESFVSSVDAERQVVQLATLEGLV.

In terms of domain architecture, PRC barrel spans 96-169; it reads EGEFYACDVE…VVQLATLEGL (74 aa).

This sequence belongs to the RimM family. As to quaternary structure, binds ribosomal protein uS19.

The protein resides in the cytoplasm. Functionally, an accessory protein needed during the final step in the assembly of 30S ribosomal subunit, possibly for assembly of the head region. Essential for efficient processing of 16S rRNA. May be needed both before and after RbfA during the maturation of 16S rRNA. It has affinity for free ribosomal 30S subunits but not for 70S ribosomes. This chain is Ribosome maturation factor RimM, found in Sorangium cellulosum (strain So ce56) (Polyangium cellulosum (strain So ce56)).